The primary structure comprises 424 residues: Lipoamide acyltransferase component of branched-chain alpha-keto acid dehydrogenase complex (424 aa).

Residues 3–78 form the Lipoyl-binding domain; it reads IEQMTMPQLG…QVGEMICKIE (76 aa). At lysine 44 the chain carries N6-lipoyllysine. Residues 82-115 are disordered; it reads ANPAEQKQEQPAASEAAENPVAKSAGAADQPNKK. The Peripheral subunit-binding (PSBD) domain maps to 116 to 153; sequence RYSPAVLRLAGEHGIDLDQVTGTGAGGRITRKDIQRLI. Residues 154-193 are disordered; that stretch reads ETGGVQEQNPEELKTAAPAPKSASKPEPKEETSYPASAAG. Catalysis depends on residues histidine 395 and aspartate 399.

This sequence belongs to the 2-oxoacid dehydrogenase family. In terms of assembly, forms a 24-polypeptide structural core with octahedral symmetry. The cofactor is (R)-lipoate.

The catalysed reaction is N(6)-[(R)-dihydrolipoyl]-L-lysyl-[protein] + 2-methylpropanoyl-CoA = N(6)-[(R)-S(8)-2-methylpropanoyldihydrolipoyl]-L-lysyl-[protein] + CoA. The branched-chain alpha-keto dehydrogenase complex catalyzes the overall conversion of alpha-keto acids to acyl-CoA and CO(2). It contains multiple copies of three enzymatic components: branched-chain alpha-keto acid decarboxylase (E1), lipoamide acyltransferase (E2) and lipoamide dehydrogenase (E3). The chain is Lipoamide acyltransferase component of branched-chain alpha-keto acid dehydrogenase complex (bfmBB) from Bacillus subtilis (strain 168).